A 362-amino-acid chain; its full sequence is Bifunctional chorismate mutase/prephenate dehydratase (362 aa).

Residues 3–91 form the Chorismate mutase domain; sequence QTIDELLIPH…ECLAVERPLT (89 aa). Substrate is bound by residues Arg-13, Arg-30, Lys-41, and Glu-52. The Prephenate dehydratase domain maps to 92–269; sequence IAYLGPQGTF…NTTRFLVMGH (178 aa). One can recognise an ACT domain in the interval 281–356; sequence SLAVSAPNRA…RASFVKAIGS (76 aa).

It localises to the cytoplasm. It catalyses the reaction chorismate = prephenate. The catalysed reaction is prephenate + H(+) = 3-phenylpyruvate + CO2 + H2O. It functions in the pathway amino-acid biosynthesis; L-phenylalanine biosynthesis; phenylpyruvate from prephenate: step 1/1. The protein operates within metabolic intermediate biosynthesis; prephenate biosynthesis; prephenate from chorismate: step 1/1. In terms of biological role, catalyzes the Claisen rearrangement of chorismate to prephenate and the decarboxylation/dehydration of prephenate to phenylpyruvate. This Neisseria gonorrhoeae (strain ATCC 700825 / FA 1090) protein is Bifunctional chorismate mutase/prephenate dehydratase (pheA).